Here is an 80-residue protein sequence, read N- to C-terminus: UPF0270 protein ASA_3305 (80 aa).

The protein belongs to the UPF0270 family.

The chain is UPF0270 protein ASA_3305 from Aeromonas salmonicida (strain A449).